Consider the following 64-residue polypeptide: Large ribosomal subunit protein uL29 (64 aa).

It belongs to the universal ribosomal protein uL29 family.

The sequence is that of Large ribosomal subunit protein uL29 from Verminephrobacter eiseniae (strain EF01-2).